The chain runs to 248 residues: uncharacterized protein (248 aa).

Positions 1 to 26 are cleaved as a signal peptide; sequence MVAPRISPKIVLVGFALFAIISASLA.

This is an uncharacterized protein from Acanthamoeba polyphaga mimivirus (APMV).